A 143-amino-acid polypeptide reads, in one-letter code: Hemoglobin subunit alpha-1 (143 aa).

S2 carries the post-translational modification N-acetylserine. The region spanning 2–143 is the Globin domain; that stretch reads SLTEKDKAAV…VSLALAERYR (142 aa). O2 is bound at residue H60. H89 serves as a coordination point for heme b.

This sequence belongs to the globin family. In terms of assembly, hb 1 is a heterotetramer of two alpha-1 and two beta chains. In terms of tissue distribution, red blood cells.

Functionally, involved in oxygen transport from gills to the various peripheral tissues. In Cottoperca gobio (Frogmouth), this protein is Hemoglobin subunit alpha-1 (hba1).